The sequence spans 91 residues: Small ribosomal subunit protein bS20 (91 aa).

The protein belongs to the bacterial ribosomal protein bS20 family.

Its function is as follows. Binds directly to 16S ribosomal RNA. The chain is Small ribosomal subunit protein bS20 from Thermosipho melanesiensis (strain DSM 12029 / CIP 104789 / BI429).